The following is an 890-amino-acid chain: Putative RNA-binding protein 15B (890 aa).

Residues 1-133 (MKRQSERDSS…AEPACPGSSA (133 aa)) are disordered. The segment covering 10–20 (SPSGRGSSSSA) has biased composition (low complexity). Basic and acidic residues-rich tracts occupy residues 22 to 34 (RPRE…EAGG) and 66 to 78 (GHRD…DANH). A compositionally biased stretch (gly residues) spans 86-99 (SGSGAGGGGRGGKA). 2 positions are modified to phosphoserine: Ser109 and Ser113. The segment covering 113–124 (SPLPPPPPPPGA) has biased composition (pro residues). The 81-residue stretch at 139–219 (KTLLISSLSP…RPLKVEPVYL (81 aa)) folds into the RRM 1 domain. Lys213 is covalently cross-linked (Glycyl lysine isopeptide (Lys-Gly) (interchain with G-Cter in SUMO2)). The segment at 219 to 253 (LRGGGGSSRRSSSSSAAASTPPPGPPAPADPLGYL) is disordered. Low complexity predominate over residues 226 to 237 (SRRSSSSSAAAS). Pro residues predominate over residues 238–247 (TPPPGPPAPA). Phosphoserine occurs at positions 265 and 267. RRM domains lie at 337–414 (RNLF…YGKA) and 418–492 (TRLW…FAKA). At Thr532 the chain carries Phosphothreonine. Positions 547–705 (EGDWTSPSKS…KPLEEPKHET (159 aa)) are disordered. A phosphoserine mark is found at Ser552, Ser556, and Ser562. Composition is skewed to basic and acidic residues over residues 573–616 (RSGE…ERSR) and 626–646 (RGSD…EGTK). A Nuclear localization signal motif is present at residues 593–597 (RRKRR). Low complexity predominate over residues 647–657 (ESSSNSLSNSR). Positions 671-703 (EAADSSHGKKARDSERNHRTTEAEPKPLEEPKH) are enriched in basic and acidic residues. Lys702 participates in a covalent cross-link: Glycyl lysine isopeptide (Lys-Gly) (interchain with G-Cter in SUMO2). The SPOC domain occupies 711 to 889 (LSEYAQTLQL…HMVIVIVRDT (179 aa)). An interaction with Epstein-Barr virus BMLF1 region spans residues 722-890 (WNGLLVLKNS…MVIVIVRDTA (169 aa)).

This sequence belongs to the RRM Spen family. In terms of assembly, component of the WMM complex, a N6-methyltransferase complex composed of a catalytic subcomplex, named MAC, and of an associated subcomplex, named MACOM. The MAC subcomplex is composed of METTL3 and METTL14. The MACOM subcomplex is composed of WTAP, ZC3H13, CBLL1/HAKAI, VIRMA, and, in some cases of RBM15 (RBM15 or RBM15B). May interact with NCOR2. Interacts with NXF1, the interaction is required to promote mRNA export. (Microbial infection) Interacts (via the SPOC domain) with Epstein-Barr virus BMLF1 (via the N-terminus); the interaction is direct. Ubiquitously expressed.

Its subcellular location is the nucleus. The protein resides in the nucleoplasm. The protein localises to the nucleus speckle. It localises to the nucleus envelope. Functionally, RNA-binding protein that acts as a key regulator of N6-methyladenosine (m6A) methylation of RNAs, thereby regulating different processes, such as alternative splicing of mRNAs and X chromosome inactivation mediated by Xist RNA. Associated component of the WMM complex, a complex that mediates N6-methyladenosine (m6A) methylation of RNAs, a modification that plays a role in the efficiency of mRNA splicing and RNA processing. Plays a key role in m6A methylation, possibly by binding target RNAs and recruiting the WMM complex. Involved in random X inactivation mediated by Xist RNA: acts by binding Xist RNA and recruiting the WMM complex, which mediates m6A methylation, leading to target YTHDC1 reader on Xist RNA and promoting transcription repression activity of Xist. Functions in the regulation of alternative or illicit splicing, possibly by regulating m6A methylation. Inhibits pre-mRNA splicing. Also functions as a mRNA export factor by acting as a cofactor for the nuclear export receptor NXF1. The sequence is that of Putative RNA-binding protein 15B from Homo sapiens (Human).